The following is a 510-amino-acid chain: ATP synthase subunit alpha (510 aa).

169–176 contributes to the ATP binding site; that stretch reads GDRQTGKT.

This sequence belongs to the ATPase alpha/beta chains family. In terms of assembly, F-type ATPases have 2 components, CF(1) - the catalytic core - and CF(0) - the membrane proton channel. CF(1) has five subunits: alpha(3), beta(3), gamma(1), delta(1), epsilon(1). CF(0) has four main subunits: a(1), b(1), b'(1) and c(9-12).

The protein localises to the cell inner membrane. It carries out the reaction ATP + H2O + 4 H(+)(in) = ADP + phosphate + 5 H(+)(out). Produces ATP from ADP in the presence of a proton gradient across the membrane. The alpha chain is a regulatory subunit. In Rhodopseudomonas palustris (strain BisB18), this protein is ATP synthase subunit alpha.